The chain runs to 1537 residues: Dual oxidase (1537 aa).

Residues 1–29 are disordered; sequence MSVPSAPHQRAESKNRVPRPGQKNRKLPK. Residues 1–626 are Extracellular-facing; sequence MSVPSAPHQR…EGYDYFSGSE (626 aa). The segment at 63–628 is peroxidase-like; mediates peroxidase activity; that stretch reads MYSQTEKQRY…YDYFSGSELM (566 aa). 4 N-linked (GlcNAc...) asparagine glycosylation sites follow: N133, N233, N577, and N606. The chain crosses the membrane as a helical span at residues 627–647; that stretch reads LMFIYVCVFLGFVPILCAGAG. Topologically, residues 648 to 1029 are cytoplasmic; that stretch reads YCVVKLQNSK…ITFLEENRQN (382 aa). Position 826 is a phosphoserine (S826). EF-hand domains lie at 855–890, 891–926, and 936–971; these read PNDM…FSRG, KTDD…LVEI, and QVTE…YKGD. Ca(2+) contacts are provided by D868, D870, D872, R874, E879, D904, D906, N908, and E915. The helical transmembrane segment at 1030-1050 threads the bilayer; the sequence is IFYLFLFYVVTIVLFVERFIH. At 1051-1065 the chain is on the extracellular side; sequence YSFMAEHTDLRHIMG. A helical membrane pass occupies residues 1066–1086; that stretch reads VGIAITRGSAASLSFCYSLLL. Residues 1078–1218 enclose the Ferric oxidoreductase domain; the sequence is LSFCYSLLLL…TLYIGLYLLS (141 aa). At 1087-1116 the chain is on the cytoplasmic side; sequence LTMSRNLITKLKEFPIQQYIPLDSHIQFHK. Residue Y1105 is modified to Phosphotyrosine. The helical transmembrane segment at 1117–1137 threads the bilayer; that stretch reads IAACTALFFSVLHTVGHIVNF. At 1138–1171 the chain is on the extracellular side; it reads YHVSTQSHENLRCLTREVHFASDYKPDITFWLFQ. Residues 1172–1192 traverse the membrane as a helical segment; sequence TVTGTTGVMLFIIMCIIFVFA. The Cytoplasmic portion of the chain corresponds to 1193–1202; sequence HPTIRKKAYN. The helical transmembrane segment at 1203 to 1223 threads the bilayer; that stretch reads FFWNMHTLYIGLYLLSLIHGL. Residues 1224–1230 are Extracellular-facing; sequence ARLTGPP. Residues 1231 to 1251 form a helical membrane-spanning segment; that stretch reads RFWMFFLGPGIVYTLDKIVSL. At 1252–1537 the chain is on the cytoplasmic side; the sequence is RTKYMALDVI…YFIHHFENFG (286 aa). Positions 1253 to 1358 constitute an FAD-binding FR-type domain; the sequence is TKYMALDVID…EGPFGGGNQD (106 aa).

In the N-terminal section; belongs to the peroxidase family.

The protein resides in the membrane. The catalysed reaction is NADH + O2 + H(+) = H2O2 + NAD(+). It catalyses the reaction NADPH + O2 + H(+) = H2O2 + NADP(+). With respect to regulation, peroxidase activity is inhibited by aminotriazole and azide. Plays a role in innate immunity limiting microbial proliferation in the gut. Acts downstream of a hh-signaling pathway to induce the production of reactive oxygen species (ROS) in response to intestinal bacterial infection. May generate antimicrobial oxidative burst through its peroxidase-like domain. This is Dual oxidase (Duox) from Drosophila melanogaster (Fruit fly).